The sequence spans 328 residues: P2Y purinoceptor 3 (328 aa).

Residues 1 to 22 lie on the Extracellular side of the membrane; it reads MSMANFTAGRNSCTFQEEFKQV. Asn5 carries N-linked (GlcNAc...) asparagine glycosylation. A helical membrane pass occupies residues 23 to 43; sequence LLPLVYSVVFLLGLPLNAVVI. Over 44–57 the chain is Cytoplasmic; it reads GQIWLARKALTRTT. A helical membrane pass occupies residues 58–78; it reads IYMLNLATADLLYVCSLPLLI. Topologically, residues 79-96 are extracellular; the sequence is YNYTQKDYWPFGDFTCKF. A disulfide bridge connects residues Cys94 and Cys172. The helical transmembrane segment at 97–117 threads the bilayer; sequence VRFQFYTNLHGSILFLTCISV. Residues 118-139 lie on the Cytoplasmic side of the membrane; the sequence is QRYMGICHPLASWHKKKGKKLT. A helical transmembrane segment spans residues 140–160; that stretch reads WLVCAAVWFIVIAQCLPTFVF. Residues 161–189 lie on the Extracellular side of the membrane; that stretch reads ASTGTQRNRTVCYDLSPPDRSASYFPYGI. The helical transmembrane segment at 190 to 210 threads the bilayer; the sequence is TLTITGFLLPFAAILACYCSM. Over 211-231 the chain is Cytoplasmic; that stretch reads ARILCQKDELIGLAVHKKKDK. The chain crosses the membrane as a helical span at residues 232-252; that stretch reads AVRMIIIVVIVFSISFFPFHL. The Extracellular portion of the chain corresponds to 253-275; sequence TKTIYLIVRSSPTLPCPTLQAFA. Residues 276–298 form a helical membrane-spanning segment; the sequence is IAYKCTRPFASMNSVLDPILFYF. Topologically, residues 299–323 are cytoplasmic; sequence TQRKFRESTRYLLDKMSSKWRHDHC.

It belongs to the G-protein coupled receptor 1 family.

It is found in the cell membrane. Its function is as follows. Receptor for extracellular UDP &gt; ADP = UTP. The activity of this receptor is mediated by G proteins which activate a phosphatidylinositol-calcium second messenger system. The sequence is that of P2Y purinoceptor 3 (P2RY3) from Meleagris gallopavo (Wild turkey).